Consider the following 162-residue polypeptide: Ribosomal RNA large subunit methyltransferase H (162 aa).

Residues Leu78, Gly109, and 128 to 133 (LSALTL) each bind S-adenosyl-L-methionine.

This sequence belongs to the RNA methyltransferase RlmH family. Homodimer.

It localises to the cytoplasm. It carries out the reaction pseudouridine(1915) in 23S rRNA + S-adenosyl-L-methionine = N(3)-methylpseudouridine(1915) in 23S rRNA + S-adenosyl-L-homocysteine + H(+). Its function is as follows. Specifically methylates the pseudouridine at position 1915 (m3Psi1915) in 23S rRNA. The chain is Ribosomal RNA large subunit methyltransferase H from Psychrobacter cryohalolentis (strain ATCC BAA-1226 / DSM 17306 / VKM B-2378 / K5).